The following is a 262-amino-acid chain: Ornithine carbamoyltransferase (262 aa).

Carbamoyl phosphate-binding positions include 3–7 (STRTR), Q30, R54, and 81–84 (HPTQ). L-ornithine is bound by residues N114, D178, and 182-183 (SM). Residues 219 to 222 (HCLP) and T247 contribute to the carbamoyl phosphate site.

This sequence belongs to the aspartate/ornithine carbamoyltransferase superfamily. OTCase family.

The protein resides in the cytoplasm. The catalysed reaction is carbamoyl phosphate + L-ornithine = L-citrulline + phosphate + H(+). Its pathway is amino-acid biosynthesis; L-arginine biosynthesis; L-arginine from L-ornithine and carbamoyl phosphate: step 1/3. Functionally, reversibly catalyzes the transfer of the carbamoyl group from carbamoyl phosphate (CP) to the N(epsilon) atom of ornithine (ORN) to produce L-citrulline. The sequence is that of Ornithine carbamoyltransferase (argF) from Neisseria mucosa.